Reading from the N-terminus, the 292-residue chain is Small ribosomal subunit biogenesis GTPase RsgA (292 aa).

Positions Lys65–Leu223 constitute a CP-type G domain. GTP is bound by residues Asn114–Asp117 and Gly165–Thr173. Zn(2+) is bound by residues Cys247, Cys252, His254, and Cys260.

It belongs to the TRAFAC class YlqF/YawG GTPase family. RsgA subfamily. In terms of assembly, monomer. Associates with 30S ribosomal subunit, binds 16S rRNA. It depends on Zn(2+) as a cofactor.

It is found in the cytoplasm. Functionally, one of several proteins that assist in the late maturation steps of the functional core of the 30S ribosomal subunit. Helps release RbfA from mature subunits. May play a role in the assembly of ribosomal proteins into the subunit. Circularly permuted GTPase that catalyzes slow GTP hydrolysis, GTPase activity is stimulated by the 30S ribosomal subunit. In Alkaliphilus metalliredigens (strain QYMF), this protein is Small ribosomal subunit biogenesis GTPase RsgA.